A 667-amino-acid chain; its full sequence is Ribosomal oxygenase 1 (667 aa).

N-acetylmethionine is present on M1. Positions 1-11 are enriched in low complexity; it reads MDGLRASAGLL. The segment at 1-99 is disordered; the sequence is MDGLRASAGL…ATGREPHGQL (99 aa). Basic residues-rich tracts occupy residues 12 to 22 and 35 to 44; these read RRGRLRRRRQQ and RPRKIRRQLR. 3 positions are modified to phosphoserine: S61, S64, and S108. A JmjC domain is found at 322–467; sequence CSLRLLCPQA…DFLEAVLPLA (146 aa). The Fe cation site is built by H368, D370, and H433.

Belongs to the ROX family. NO66 subfamily. As to quaternary structure, interacts with SP7/OSX; the interaction is direct. Interacts with MYC. Interacts with PHF19; leading to its recruitment to H3K36me3 sites. Fe(2+) is required as a cofactor.

Its subcellular location is the nucleus. It localises to the nucleolus. It is found in the nucleoplasm. The enzyme catalyses N(6),N(6)-dimethyl-L-lysyl(36)-[histone H3] + 2 2-oxoglutarate + 2 O2 = L-lysyl(36)-[histone H3] + 2 formaldehyde + 2 succinate + 2 CO2. It catalyses the reaction N(6)-methyl-L-lysyl-[protein] + 2-oxoglutarate + O2 = L-lysyl-[protein] + formaldehyde + succinate + CO2. The catalysed reaction is L-histidyl-[protein] + 2-oxoglutarate + O2 = (3S)-3-hydroxy-L-histidyl-[protein] + succinate + CO2. Oxygenase that can act as both a histone lysine demethylase and a ribosomal histidine hydroxylase. Specifically demethylates 'Lys-4' (H3K4me) and 'Lys-36' (H3K36me) of histone H3, thereby playing a central role in histone code. Preferentially demethylates trimethylated H3 'Lys-4' (H3K4me3) and monomethylated H3 'Lys-4' (H3K4me1) residues, while it has weaker activity for dimethylated H3 'Lys-36' (H3K36me2). Acts as a regulator of osteoblast differentiation via its interaction with SP7/OSX by demethylating H3K4me and H3K36me, thereby inhibiting SP7/OSX-mediated promoter activation. Also catalyzes demethylation of non-histone proteins, such as CGAS: demethylation of monomethylated CGAS promotes interaction between CGAS and PARP1, followed by PARP1 inactivation. Also catalyzes the hydroxylation of 60S ribosomal protein L8 on 'His-216', thereby playing a role in ribosome biogenesis. Participates in MYC-induced transcriptional activation. The protein is Ribosomal oxygenase 1 (RIOX1) of Bos taurus (Bovine).